A 173-amino-acid polypeptide reads, in one-letter code: Photosystem I assembly protein Ycf3 (173 aa).

3 TPR repeats span residues 35-68 (AFVY…EENP), 72-105 (SYIL…NPKM), and 120-153 (GEKA…APNN).

This sequence belongs to the Ycf3 family.

It localises to the cellular thylakoid membrane. Its function is as follows. Essential for the assembly of the photosystem I (PSI) complex. May act as a chaperone-like factor to guide the assembly of the PSI subunits. The protein is Photosystem I assembly protein Ycf3 of Synechocystis sp. (strain ATCC 27184 / PCC 6803 / Kazusa).